The following is a 691-amino-acid chain: MSNSFTLPLRPARQKANREDDLAVKIAQINAQKGSFRDVTEASLLAEIEAARAVGDGEAEAVDVKTGEDEEENREEKLFKSRLEISQFAMNAHMEATYALEFVSLLLSKHAPRQAETSMSPLLKQKVPLGSLGADHIKPPEQSETQKRDVDAVSRGWKLESFDAAANKLLQSAQRLEEDIAAETKYWSEVLKIKEKGWKVCRLPQERQTLGVHFGFLESTQNFRDRGLAALRKGEAGRLILDRGIQLKPPRFVRVRVQRGDQTLGLTIPAISKQLDDQCLDGRIREARDSLYEEELFYELNREARVLLQYGVEIRRDLLKFPADDNKHIFVDLVGLDEALPDIGGLDPLDNLLAEGVAKSFRILLSYAHRKNHHRRTRVPPPVTPNKRPAPEYNIIRPLLCYFQHRSHYQWFTSFFGTLSKTLRSAGLKCSYTLYPLMKRPQSRAGSSQQTLTVSSVERLIDTLINPSESIISCNLISQGSVFRVRITTNVNPNGLGSEFELVTNLAHFPAQQSPFRFGLREDVRDLIIHLFTLDLVYLVPSLVKGSASAGASQYLISRYTGSQAFVEEESTDENEFAPSPAAKQDDVYLLPWQPTFPQQGELTAYSPARCRTKKLQIQLQSDQLQLRCFWVRHRGPSTKADEQPGERLFTWRAVDMLGGAEESSRPTLQRVMELLGEKYDDQTVQNIGSK.

Residues 158–185 are a coiled coil; it reads KLESFDAAANKLLQSAQRLEEDIAAETK.

It belongs to the Mediator complex subunit 17 family. Component of the Mediator complex.

It localises to the nucleus. Its function is as follows. Component of the Mediator complex, a coactivator involved in the regulated transcription of nearly all RNA polymerase II-dependent genes. Mediator functions as a bridge to convey information from gene-specific regulatory proteins to the basal RNA polymerase II transcription machinery. Mediator is recruited to promoters by direct interactions with regulatory proteins and serves as a scaffold for the assembly of a functional preinitiation complex with RNA polymerase II and the general transcription factors. This chain is Mediator of RNA polymerase II transcription subunit 17 (SRB4), found in Coccidioides immitis (strain RS) (Valley fever fungus).